Consider the following 67-residue polypeptide: Large ribosomal subunit protein bL35 (67 aa).

This sequence belongs to the bacterial ribosomal protein bL35 family.

In Dehalococcoides mccartyi (strain ATCC BAA-2100 / JCM 16839 / KCTC 5957 / BAV1), this protein is Large ribosomal subunit protein bL35.